The chain runs to 244 residues: Probable hydrolase R7 (244 aa).

The signal sequence occupies residues 1–20 (MTKPFILLVPGSFAPETIYA). Residues D192 and H224 each act as charge relay system in the active site. A glycan (N-linked (GlcNAc...) asparagine) is linked at N227.

Belongs to the AB hydrolase superfamily.

It functions in the pathway secondary metabolite biosynthesis. Its function is as follows. Probable hydrolase; part of the gene cluster that mediates the biosynthesis of squalestatin S1 (SQS1, also known as zaragozic acid A), a lead compound for the treatment of hyper-cholesterolemia by targeting squalene synthase (SS). Both phenylalanine and benzoic acid are known precursors of SQS1 and so it is unsurprising that the cluster also contains genes potentially involved in benzoate production such as phenyl-alanine ammonia lysase (PAL) M7, which catalyzes the first step in the degradation of phenylalanine, or the NADP-dependent dehydrogenase M3. The cluster contains two PKS encoding genes. The tetraketide synthase is responsible for the biosynthesis of the tetraketide sidechain of SQS1. The biosynthesis must involve 3 rounds of chain extension. After the first and second rounds methyl-transfer occurs, and in all rounds of extension the ketoreductase and dehydratase areactive. The enoyl reductase and C-MeT are not active in the final round of extension. The other PKS is therefore likely to encode squalestatin hexaketide synthase (SQHKS). The hexaketide main chain is initiated by benzoate which is an unusual starter unit for a highly reducing polyketide synthase. The cluster also contains a gene encoding a citrate synthase-like protein R3 presumably involved in linking the hexaketide to the oxaloacetate moiety. Formation of the tetraketide CoA may be catalyzed by the M9 CoA ligase, but the mechanism of release of the tetraketide and the hexaketide from their respective PKS remains unknown, although the cluster encodes a potential esterase (M8) and a possible hydrolase (M10) which could be involved in these processes. Two acyltransferases (AT), M4 and R4, are also encoded in the cluster. M4 is responsible for loading of the tetraketide sidechain from CoA onto the squalestatin core as the final step of biosynthesis. M4 appears to have a broad substrate selectivity for its acyl CoA substrate, allowing the in vitro synthesis of novel squalestatins. The biosynthesis of SQS1 requires several oxidative steps likely performed by oxidoreductases M1, R1 and R2. Finally, in support of the identification of the cluster as being responsible for SQS1 production, the cluster contains a gene encoding a putative squalene synthase (SS) R6, suggesting a likely mechanism for self-resistance. The chain is Probable hydrolase R7 from Phoma sp. (strain ATCC 20986 / MF5453).